Here is a 217-residue protein sequence, read N- to C-terminus: Vesicle transport through interaction with t-SNAREs homolog 1A (217 aa).

The Cytoplasmic portion of the chain corresponds to Met1–Arg192. 2 coiled-coil regions span residues Pro31 to Arg92 and Glu112 to Ser178. The chain crosses the membrane as a helical span at residues Ile193 to Ser213. Over Val214–His217 the chain is Extracellular.

This sequence belongs to the VTI1 family. In terms of assembly, interacts with distinct SNARE complexes that contain either STX5 or STX6. Interacts with NAPA and, to a lesser extent, with NAPG. Identified in a complex containing STX6, STX12, VAMP4 and VTI1A.

Its subcellular location is the cytoplasmic vesicle. The protein localises to the golgi apparatus membrane. V-SNARE that mediates vesicle transport pathways through interactions with t-SNAREs on the target membrane. These interactions are proposed to mediate aspects of the specificity of vesicle trafficking and to promote fusion of the lipid bilayers. Involved in vesicular transport from the late endosomes to the trans-Golgi network. Along with VAMP7, involved in an non-conventional RAB1-dependent traffic route to the cell surface used by KCNIP1 and KCND2. May be involved in increased cytokine secretion associated with cellular senescence. The polypeptide is Vesicle transport through interaction with t-SNAREs homolog 1A (VTI1A) (Homo sapiens (Human)).